A 203-amino-acid polypeptide reads, in one-letter code: Histidine biosynthesis bifunctional protein HisIE (203 aa).

Residues 1–114 are phosphoribosyl-AMP cyclohydrolase; it reads MLTEQQRREL…FGDTAHQWLF (114 aa). The phosphoribosyl-ATP pyrophosphohydrolase stretch occupies residues 115 to 203; sequence LYQLEQLLAE…VIENLRKRHQ (89 aa).

In the N-terminal section; belongs to the PRA-CH family. It in the C-terminal section; belongs to the PRA-PH family.

Its subcellular location is the cytoplasm. The catalysed reaction is 1-(5-phospho-beta-D-ribosyl)-ATP + H2O = 1-(5-phospho-beta-D-ribosyl)-5'-AMP + diphosphate + H(+). It carries out the reaction 1-(5-phospho-beta-D-ribosyl)-5'-AMP + H2O = 1-(5-phospho-beta-D-ribosyl)-5-[(5-phospho-beta-D-ribosylamino)methylideneamino]imidazole-4-carboxamide. It participates in amino-acid biosynthesis; L-histidine biosynthesis; L-histidine from 5-phospho-alpha-D-ribose 1-diphosphate: step 2/9. Its pathway is amino-acid biosynthesis; L-histidine biosynthesis; L-histidine from 5-phospho-alpha-D-ribose 1-diphosphate: step 3/9. In Escherichia coli (strain K12), this protein is Histidine biosynthesis bifunctional protein HisIE (hisI).